The sequence spans 290 residues: 4-hydroxy-tetrahydrodipicolinate synthase (290 aa).

A pyruvate-binding site is contributed by threonine 46. Tyrosine 134 acts as the Proton donor/acceptor in catalysis. Lysine 163 acts as the Schiff-base intermediate with substrate in catalysis. Residue valine 205 participates in pyruvate binding.

The protein belongs to the DapA family. In terms of assembly, homotetramer; dimer of dimers.

It localises to the cytoplasm. The catalysed reaction is L-aspartate 4-semialdehyde + pyruvate = (2S,4S)-4-hydroxy-2,3,4,5-tetrahydrodipicolinate + H2O + H(+). It functions in the pathway amino-acid biosynthesis; L-lysine biosynthesis via DAP pathway; (S)-tetrahydrodipicolinate from L-aspartate: step 3/4. Its function is as follows. Catalyzes the condensation of (S)-aspartate-beta-semialdehyde [(S)-ASA] and pyruvate to 4-hydroxy-tetrahydrodipicolinate (HTPA). This chain is 4-hydroxy-tetrahydrodipicolinate synthase, found in Bacillus subtilis (strain 168).